Consider the following 157-residue polypeptide: uncharacterized protein (157 aa).

Residue lysine 115 forms an Isoglutamyl lysine isopeptide (Lys-Gln) (interchain with Q-Cter in protein Pup) linkage.

This is an uncharacterized protein from Mycolicibacterium smegmatis (strain ATCC 700084 / mc(2)155) (Mycobacterium smegmatis).